A 260-amino-acid polypeptide reads, in one-letter code: Cytosolic Fe-S cluster assembly factor Nubp2 homolog (260 aa).

14 to 21 (GKGGVGKS) lines the ATP pocket. 2 residues coordinate [4Fe-4S] cluster: Cys-188 and Cys-191.

This sequence belongs to the Mrp/NBP35 ATP-binding proteins family. NUBP2/CFD1 subfamily. As to quaternary structure, heterotetramer of 2 Nubp1 and 2 Nubp2 chains. [4Fe-4S] cluster serves as cofactor.

It localises to the cytoplasm. Functionally, component of the cytosolic iron-sulfur (Fe/S) protein assembly (CIA) machinery. Required for maturation of extramitochondrial Fe-S proteins. The Nubp1-Nubp2 heterotetramer forms a Fe-S scaffold complex, mediating the de novo assembly of an Fe-S cluster and its transfer to target apoproteins. In Drosophila erecta (Fruit fly), this protein is Cytosolic Fe-S cluster assembly factor Nubp2 homolog.